The following is a 95-amino-acid chain: Large ribosomal subunit protein uL23 (95 aa).

Belongs to the universal ribosomal protein uL23 family. In terms of assembly, part of the 50S ribosomal subunit. Contacts protein L29, and trigger factor when it is bound to the ribosome.

Its function is as follows. One of the early assembly proteins it binds 23S rRNA. One of the proteins that surrounds the polypeptide exit tunnel on the outside of the ribosome. Forms the main docking site for trigger factor binding to the ribosome. The sequence is that of Large ribosomal subunit protein uL23 from Coxiella burnetii (strain CbuK_Q154) (Coxiella burnetii (strain Q154)).